The following is a 126-amino-acid chain: Fluoride-specific ion channel FluC (126 aa).

Helical transmembrane passes span 5–25 (LHFL…WLLG), 35–55 (WGTL…LGLI), 68–88 (ALVT…AEVV), and 99–119 (AAGY…LGLA). The Na(+) site is built by Gly-75 and Thr-78.

The protein belongs to the fluoride channel Fluc/FEX (TC 1.A.43) family.

Its subcellular location is the cell inner membrane. It catalyses the reaction fluoride(in) = fluoride(out). Na(+) is not transported, but it plays an essential structural role and its presence is essential for fluoride channel function. Functionally, fluoride-specific ion channel. Important for reducing fluoride concentration in the cell, thus reducing its toxicity. The sequence is that of Fluoride-specific ion channel FluC from Bordetella avium (strain 197N).